An 88-amino-acid chain; its full sequence is Large ribosomal subunit protein bL27 (88 aa).

Residues 1–13 (MATKKSGGSSSNG) are compositionally biased toward low complexity. The interval 1–24 (MATKKSGGSSSNGRDSRGRRLGVK) is disordered.

It belongs to the bacterial ribosomal protein bL27 family.

This chain is Large ribosomal subunit protein bL27, found in Ehrlichia ruminantium (strain Gardel).